The following is a 460-amino-acid chain: Dynactin subunit 4 (460 aa).

At Ala-2 the chain carries N-acetylalanine. Positions 152 to 172 (QQLAQKEKVERDRKKLARRRN) form a coiled coil. Ser-196 is modified (phosphoserine). Residue Lys-215 forms a Glycyl lysine isopeptide (Lys-Gly) (interchain with G-Cter in SUMO2) linkage. Residue Thr-407 is modified to Phosphothreonine.

The protein belongs to the dynactin subunit 4 family. Subunit of dynactin, a multiprotein complex part of a tripartite complex with dynein and a adapter, such as BICDL1, BICD2 or HOOK3. The dynactin complex is built around ACTR1A/ACTB filament and consists of an actin-related filament composed of a shoulder domain, a pointed end and a barbed end. Its length is defined by its flexible shoulder domain. The soulder is composed of 2 DCTN1 subunits, 4 DCTN2 and 2 DCTN3. The 4 DCNT2 (via N-terminus) bind the ACTR1A filament and act as molecular rulers to determine the length. The pointed end is important for binding dynein-dynactin cargo adapters. Consists of 4 subunits: ACTR10, DCNT4, DCTN5 and DCTN6. The barbed end is composed of a CAPZA1:CAPZB heterodimers, which binds ACTR1A/ACTB filament and dynactin and stabilizes dynactin. Interacts with ATP7B, but not ATP7A, in a copper-dependent manner. Interacts with ANK2; this interaction is required for localization at costameres. Interacts with N4BP2L1.

It localises to the cytoplasm. It is found in the cytoskeleton. Its subcellular location is the microtubule organizing center. The protein localises to the centrosome. The protein resides in the stress fiber. It localises to the cell cortex. It is found in the myofibril. Its subcellular location is the sarcomere. In terms of biological role, part of the dynactin complex that activates the molecular motor dynein for ultra-processive transport along microtubules. This is Dynactin subunit 4 from Homo sapiens (Human).